The chain runs to 363 residues: Type-2 angiotensin II receptor (363 aa).

At 1-45 the chain is on the extracellular side; it reads MKDNFSFAATSRNITSSLPFVNLNMSGTNDLIFNCSHKPSDKHLE. Residues Asn-4, Asn-13, Asn-24, and Asn-34 are each glycosylated (N-linked (GlcNAc...) asparagine). Disulfide bonds link Cys-35–Cys-290 and Cys-117–Cys-195. Residues 46 to 70 form a helical membrane-spanning segment; that stretch reads AIPVLYYLIFVIGFAVNIIVVSLFC. The Cytoplasmic segment spans residues 71-80; sequence CQKGPKKVSS. Residues 81 to 104 traverse the membrane as a helical segment; sequence IYIFNLAVADLLLLATLPLWATYY. Positions 103 and 104 each coordinate angiotensin II. At 105-114 the chain is on the extracellular side; sequence SYRYDWLFGP. The chain crosses the membrane as a helical span at residues 115–140; the sequence is VMCKVFGSFLTLNMFASIFFITCMSV. Topologically, residues 141-159 are cytoplasmic; the sequence is DRYQSVIYPFLSQRRNPWQ. A helical transmembrane segment spans residues 160 to 181; sequence ASYVVPLVWCMACLSSLPTFYF. 3 residues coordinate angiotensin II: Arg-182, Tyr-204, and Lys-215. Over 182–206 the chain is Extracellular; the sequence is RDVRTIEYLGVNACVMAFPPEKYAQ. A helical membrane pass occupies residues 207-232; that stretch reads WSAGIALMKNVLGFIIPLIFIATCYF. Over 233 to 257 the chain is Cytoplasmic; that stretch reads GIRKHLLKTNSYGKNRITRDQVLKM. The helical transmembrane segment at 258 to 281 threads the bilayer; that stretch reads AAAVVLAFIICWLPFHVLTFLDAL. Asp-279 serves as a coordination point for angiotensin II. Residues 282–294 lie on the Extracellular side of the membrane; that stretch reads SWMGIINSCEVMA. The chain crosses the membrane as a helical span at residues 295–320; sequence VIDLALPFAILLGFTNSCVNPFLYCF. Asp-297 is a binding site for angiotensin II. Over 321-363 the chain is Cytoplasmic; sequence VGNRFQQKLRSMFRVPITWLQGKRETMSCRKSSSLREMDTFVS. The segment at 324–333 is helix VIII; sequence RFQQKLRSMF. Ser-354 bears the Phosphoserine; by PKC mark.

It belongs to the G-protein coupled receptor 1 family. As to quaternary structure, interacts with MTUS1.

Its subcellular location is the cell membrane. Functionally, receptor for angiotensin II, a vasoconstricting peptide. Signals primarily via a non-canonical G-protein- and beta-arrestin independent pathways. Cooperates with MTUS1 to inhibit ERK2 activation and cell proliferation. This Meriones unguiculatus (Mongolian jird) protein is Type-2 angiotensin II receptor (AGTR2).